The sequence spans 179 residues: Large ribosomal subunit protein uL5 (179 aa).

The protein belongs to the universal ribosomal protein uL5 family. Part of the 50S ribosomal subunit; part of the 5S rRNA/L5/L18/L25 subcomplex. Contacts the 5S rRNA and the P site tRNA. Forms a bridge to the 30S subunit in the 70S ribosome.

Functionally, this is one of the proteins that bind and probably mediate the attachment of the 5S RNA into the large ribosomal subunit, where it forms part of the central protuberance. In the 70S ribosome it contacts protein S13 of the 30S subunit (bridge B1b), connecting the 2 subunits; this bridge is implicated in subunit movement. Contacts the P site tRNA; the 5S rRNA and some of its associated proteins might help stabilize positioning of ribosome-bound tRNAs. The protein is Large ribosomal subunit protein uL5 of Trichlorobacter lovleyi (strain ATCC BAA-1151 / DSM 17278 / SZ) (Geobacter lovleyi).